A 422-amino-acid polypeptide reads, in one-letter code: Structural polyprotein (422 aa).

Residues 1-359 (SVTEHFNVYK…WPHEIIQYYY (359 aa)) are Extracellular-facing. N-linked (GlcNAc...) asparagine; by host glycosylation is found at asparagine 200 and asparagine 262. The chain crosses the membrane as a helical span at residues 360-382 (GLYPAATIAAVSGXSLMALLTLA). At 383-422 (ATCCMLATARRKCLTPYALTPGAVVPLTLGLXXCAPRANA) the chain is on the cytoplasmic side. Residues cysteine 385, cysteine 395, and cysteine 416 are each lipidated (S-palmitoyl cysteine; by host). The transient transmembrane before p62-6K protein processing stretch occupies residues 395–415 (CLTPYALTPGAVVPLTLGLXX).

As to quaternary structure, spike glycoprotein E2: Processing of the precursor of protein E3/E2 into E2 and E3 results in a heterodimer of the spike glycoproteins E2 and E1. Spike glycoprotein E2: Spike at virion surface are constituted of three E2-E1 heterodimers. Spike glycoprotein E2: Interacts with 6K protein. Structural polyprotein: Specific enzymatic cleavages in vivo yield mature proteins. Capsid protein is auto-cleaved during polyprotein translation, unmasking a signal peptide at the N-terminus of the precursor of E3/E2. The remaining polyprotein is then targeted to the host endoplasmic reticulum, where host signal peptidase cleaves it into pE2, 6K and E1 proteins. pE2 is further processed to mature E3 and E2 by host furin in trans-Golgi vesicle. In terms of processing, spike glycoprotein E2: Palmitoylated via thioester bonds. These palmitoylations may induce disruption of the C-terminus transmembrane. This would result in the reorientation of E2 C-terminus from lumenal to cytoplasmic side. Post-translationally, spike glycoprotein E2: N-glycosylated.

It is found in the virion membrane. It localises to the host cell membrane. Spike glycoprotein E2: Plays a role in viral attachment to target host cell, by binding to the cell receptor. Synthesized as a p62 precursor which is processed by furin at the cell membrane just before virion budding, giving rise to E2-E1 heterodimer. The p62-E1 heterodimer is stable, whereas E2-E1 is unstable and dissociate at low pH. p62 is processed at the last step, presumably to avoid E1 fusion activation before its final export to cell surface. E2 C-terminus contains a transitory transmembrane that would be disrupted by palmitoylation, resulting in reorientation of the C-terminal tail from lumenal to cytoplasmic side. This step is critical since E2 C-terminus is involved in budding by interacting with capsid proteins. This release of E2 C-terminus in cytoplasm occurs lately in protein export, and precludes premature assembly of particles at the endoplasmic reticulum membrane. The sequence is that of Structural polyprotein from Ross river virus (strain 213970) (RRV).